We begin with the raw amino-acid sequence, 58 residues long: Protein translocase subunit SecE (58 aa).

A helical transmembrane segment spans residues 38-58; it reads IVMAFVGLLAYLIQLVLAFII.

It belongs to the SecE/SEC61-gamma family. As to quaternary structure, component of the Sec protein translocase complex. Heterotrimer consisting of SecY (alpha), SecG (beta) and SecE (gamma) subunits. The heterotrimers can form oligomers, although 1 heterotrimer is thought to be able to translocate proteins. Interacts with the ribosome. May interact with SecDF, and other proteins may be involved.

The protein localises to the cell membrane. Functionally, essential subunit of the Sec protein translocation channel SecYEG. Clamps together the 2 halves of SecY. May contact the channel plug during translocation. This chain is Protein translocase subunit SecE, found in Acidianus ambivalens (Desulfurolobus ambivalens).